A 200-amino-acid chain; its full sequence is 7-methyl-GTP pyrophosphatase (200 aa).

Catalysis depends on aspartate 69, which acts as the Proton acceptor.

It belongs to the Maf family. YceF subfamily. A divalent metal cation serves as cofactor.

It localises to the cytoplasm. The enzyme catalyses N(7)-methyl-GTP + H2O = N(7)-methyl-GMP + diphosphate + H(+). In terms of biological role, nucleoside triphosphate pyrophosphatase that hydrolyzes 7-methyl-GTP (m(7)GTP). May have a dual role in cell division arrest and in preventing the incorporation of modified nucleotides into cellular nucleic acids. The polypeptide is 7-methyl-GTP pyrophosphatase (Colwellia psychrerythraea (strain 34H / ATCC BAA-681) (Vibrio psychroerythus)).